The sequence spans 580 residues: Anaphase-promoting complex subunit 7 (580 aa).

TPR repeat units follow at residues 50–83 (IISF…LFKV), 107–140 (YELK…SRGL), 141–175 (DTHL…CPLC), 253–286 (VLEK…DPYY), 321–354 (AETW…KESH), 356–388 (FAHS…SKNI), 390–421 (TARE…SPDY), 422–456 (SKTM…SPHC), 458–490 (DTVL…QETD), and 491–523 (LMHT…NPQY). Residues 539 to 580 (GIDPDQELDQENDDDDQEEGEGENDQEENDDDDNDDDDEYIS) are disordered. Residues 542–580 (PDQELDQENDDDDQEEGEGENDQEENDDDDNDDDDEYIS) are compositionally biased toward acidic residues.

It belongs to the APC7 family. The APC/C is composed of at least 13 subunits that stay tightly associated throughout the cell cycle: anapc1, anapc2, anapc3, anapc4, anapc5, anapc6, anapc7, anapc8, anapc10, anapc11, cdc20, cdc26 and cdh1.

The protein resides in the nucleus. The protein operates within protein modification; protein ubiquitination. Its function is as follows. Component of the anaphase promoting complex/cyclosome (APC/C), a cell cycle-regulated E3 ubiquitin-protein ligase complex that controls progression through mitosis and the G1 phase of the cell cycle. This is Anaphase-promoting complex subunit 7 (anapc7) from Dictyostelium discoideum (Social amoeba).